A 27-amino-acid chain; its full sequence is Zinc metalloproteinase multactivase catalytic subunit (27 aa).

The region spanning 12–27 is the Peptidase M12B domain; the sequence is FIELVIIVDHSXXTYK. Glu-14 contacts Ca(2+).

It belongs to the venom metalloproteinase (M12B) family. P-III subfamily. P-IIId sub-subfamily. In terms of assembly, heterodimer of a metalloproteinase subunit and a regulatory subunit comprising two homologous disulfide-linked lectins (AC P81798). Requires Zn(2+) as cofactor. In terms of tissue distribution, expressed by the venom gland.

It is found in the secreted. Its function is as follows. This carinactivase-like calcium-dependent prothrombin (F2) activator activates prothrombin via recognition of the calcium ion bound conformation of its gamma-carboxyglutamic acid (GLA) domain, and the subsequent conversion of prothrombin to active thrombin is catalyzed by the catalytic subunit. This chain is Zinc metalloproteinase multactivase catalytic subunit, found in Echis multisquamatus (Central Asian sand viper).